A 95-amino-acid chain; its full sequence is Aspartyl/glutamyl-tRNA(Asn/Gln) amidotransferase subunit C (95 aa).

The protein belongs to the GatC family. As to quaternary structure, heterotrimer of A, B and C subunits.

It carries out the reaction L-glutamyl-tRNA(Gln) + L-glutamine + ATP + H2O = L-glutaminyl-tRNA(Gln) + L-glutamate + ADP + phosphate + H(+). The enzyme catalyses L-aspartyl-tRNA(Asn) + L-glutamine + ATP + H2O = L-asparaginyl-tRNA(Asn) + L-glutamate + ADP + phosphate + 2 H(+). Functionally, allows the formation of correctly charged Asn-tRNA(Asn) or Gln-tRNA(Gln) through the transamidation of misacylated Asp-tRNA(Asn) or Glu-tRNA(Gln) in organisms which lack either or both of asparaginyl-tRNA or glutaminyl-tRNA synthetases. The reaction takes place in the presence of glutamine and ATP through an activated phospho-Asp-tRNA(Asn) or phospho-Glu-tRNA(Gln). The sequence is that of Aspartyl/glutamyl-tRNA(Asn/Gln) amidotransferase subunit C from Pseudomonas fluorescens (strain ATCC BAA-477 / NRRL B-23932 / Pf-5).